The sequence spans 238 residues: Ditrans,polycis-undecaprenyl-diphosphate synthase ((2E,6E)-farnesyl-diphosphate specific) (238 aa).

The active site involves aspartate 14. A Mg(2+)-binding site is contributed by aspartate 14. Substrate is bound by residues 15–18 (GNGR), tryptophan 19, arginine 27, histidine 31, and 59–61 (SSE). The Proton acceptor role is filled by asparagine 62. Substrate-binding positions include tryptophan 63, arginine 65, arginine 182, and 188–190 (RIS). Glutamate 201 is a Mg(2+) binding site.

This sequence belongs to the UPP synthase family. In terms of assembly, homodimer. Requires Mg(2+) as cofactor.

The catalysed reaction is 8 isopentenyl diphosphate + (2E,6E)-farnesyl diphosphate = di-trans,octa-cis-undecaprenyl diphosphate + 8 diphosphate. Its function is as follows. Catalyzes the sequential condensation of isopentenyl diphosphate (IPP) with (2E,6E)-farnesyl diphosphate (E,E-FPP) to yield (2Z,6Z,10Z,14Z,18Z,22Z,26Z,30Z,34E,38E)-undecaprenyl diphosphate (di-trans,octa-cis-UPP). UPP is the precursor of glycosyl carrier lipid in the biosynthesis of bacterial cell wall polysaccharide components such as peptidoglycan and lipopolysaccharide. This is Ditrans,polycis-undecaprenyl-diphosphate synthase ((2E,6E)-farnesyl-diphosphate specific) from Legionella pneumophila (strain Paris).